The sequence spans 88 residues: Small ribosomal subunit protein uS15 (88 aa).

It belongs to the universal ribosomal protein uS15 family. As to quaternary structure, part of the 30S ribosomal subunit. Forms a bridge to the 50S subunit in the 70S ribosome, contacting the 23S rRNA.

In terms of biological role, one of the primary rRNA binding proteins, it binds directly to 16S rRNA where it helps nucleate assembly of the platform of the 30S subunit by binding and bridging several RNA helices of the 16S rRNA. Functionally, forms an intersubunit bridge (bridge B4) with the 23S rRNA of the 50S subunit in the ribosome. In Opitutus terrae (strain DSM 11246 / JCM 15787 / PB90-1), this protein is Small ribosomal subunit protein uS15.